The sequence spans 325 residues: Prenytransferase adrG (325 aa).

7 consecutive transmembrane segments (helical) span residues 47–67 (LVGVAFSASISSTKIPIAVLL), 71–91 (MLLSIWSIFLRSAGCVWDDLI), 117–137 (ALLLTVALFACGGTVLIFLPW), 163–183 (PQITLMNIGWAVPMAMHSLGL), 189–209 (MTPTVCMFLFIGSVIIMIDVI), 236–256 (LLSYSLLCASTGFLAMAGVLT), and 258–278 (LGLPFFVLSVGGHFCGFWVLL).

The protein belongs to the UbiA prenyltransferase family. It depends on Mg(2+) as a cofactor.

It localises to the membrane. The enzyme catalyses 3,5-dimethylorsellinate + (2E,6E)-farnesyl diphosphate = (3R)-3-farnesyl-6-hydroxy-2,3,5-trimethyl-4-oxocyclohexa-1,5-diene-1-carboxylate + diphosphate + H(+). It functions in the pathway secondary metabolite biosynthesis; terpenoid biosynthesis. Its function is as follows. Prenytransferase; part of the gene cluster that mediates the biosynthesis of andrastins, meroterpenoid compounds that exhibit inhibitory activity against ras farnesyltransferase, suggesting that they could be promising leads for antitumor agents. The first step of the pathway is the synthesis of 3,5-dimethylorsellinic acid (DMOA) by the polyketide synthase adrD via condensation of one acetyl-CoA starter unit with 3 malonyl-CoA units and 2 methylations. DMAO is then converted to farnesyl-DMAO by the prenyltransferase adrG. The methyltransferase adrK catalyzes the methylation of the carboxyl group of farnesyl-DMAO to farnesyl-DMAO methyl ester which is further converted to epoxyfarnesyl-DMAO methyl ester by the FAD-dependent monooxygenase adrH. The terpene cyclase adrI then catalyzes the carbon skeletal rearrangement to generate the andrastin E, the first compound in the pathway having the andrastin scaffold, with the tetracyclic ring system. The post-cyclization tailoring enzymes adrF, adrE, adrJ, and adrA, are involved in the conversion of andrastin E into andrastin A. The short chain dehydrogenase adrF is responsible for the oxidation of the C-3 a hydroxyl group of andrastin E to yield the corresponding ketone, andrastin D. The ketoreductase adrE stereoselectively reduces the carbonyl moiety to reverse the stereochemistry of the C-3 position to yield andrastin F. The acetyltransferase adrJ is the acetyltransferase that attaches the acetyl group to the C-3 hydroxyl group of andrastin F to yield andrastin C. Finally, the cytochrome P450 monooxygenase adrA catalyzes two sequential oxidation reactions of the C-23 methyl group, to generate the corresponding alcohol andrastin B, and aldehyde andrastin A. This chain is Prenytransferase adrG, found in Penicillium rubens (strain ATCC 28089 / DSM 1075 / NRRL 1951 / Wisconsin 54-1255) (Penicillium chrysogenum).